A 443-amino-acid polypeptide reads, in one-letter code: Ribulose bisphosphate carboxylase large chain (443 aa).

Residues Asn89 and Thr139 each coordinate substrate. The active-site Proton acceptor is the Lys141. Lys143 is a substrate binding site. 3 residues coordinate Mg(2+): Lys167, Asp169, and Glu170. Lys167 is modified (N6-carboxylysine). Residue His260 is the Proton acceptor of the active site. Residues Arg261, His293, and Ser345 each contribute to the substrate site.

The protein belongs to the RuBisCO large chain family. Type I subfamily. Heterohexadecamer of 8 large chains and 8 small chains; disulfide-linked. The disulfide link is formed within the large subunit homodimers. Mg(2+) is required as a cofactor. In terms of processing, the disulfide bond which can form in the large chain dimeric partners within the hexadecamer appears to be associated with oxidative stress and protein turnover.

The protein resides in the plastid. The protein localises to the chloroplast. It catalyses the reaction 2 (2R)-3-phosphoglycerate + 2 H(+) = D-ribulose 1,5-bisphosphate + CO2 + H2O. The enzyme catalyses D-ribulose 1,5-bisphosphate + O2 = 2-phosphoglycolate + (2R)-3-phosphoglycerate + 2 H(+). RuBisCO catalyzes two reactions: the carboxylation of D-ribulose 1,5-bisphosphate, the primary event in carbon dioxide fixation, as well as the oxidative fragmentation of the pentose substrate in the photorespiration process. Both reactions occur simultaneously and in competition at the same active site. This is Ribulose bisphosphate carboxylase large chain from Buddleja davidii (Butterfly bush).